The primary structure comprises 545 residues: E3 ubiquitin-protein ligase ipaH9.8 (545 aa).

The interaction with target proteins stretch occupies residues 1 to 242; it reads MLPINNNFSL…YHGPRIYFSM (242 aa). 8 LRR repeats span residues 57 to 77, 78 to 99, 100 to 117, 118 to 139, 140 to 157, 158 to 179, 182 to 203, and 205 to 228; these read NSDE…NLPA, QITL…PVTL, KKLY…VLPP, ALES…PDSL, LTMN…SLPQ, ALKN…SEGN, VVRE…ILNL, and NECS…QRLT. The linker stretch occupies residues 243–250; sequence SDGQQNTL. The tract at residues 251 to 545 is E3 ubiquitin-protein ligase catalytic domain; that stretch reads HRPLADAVTA…SENGSQLHHS (295 aa). Residues 253-545 enclose the NEL domain; sequence PLADAVTAWF…SENGSQLHHS (293 aa). Cys-337 acts as the Glycyl thioester intermediate in catalysis.

The protein belongs to the LRR-containing bacterial E3 ligase family. As to quaternary structure, also interacts with human and mouse U2AF1 (U2AF35). Post-translationally, ubiquitinated in the presence of host E1 ubiquitin-activating enzyme, E2 ubiquitin-conjugating enzyme and ubiquitin.

Its subcellular location is the secreted. It localises to the host cytoplasm. It is found in the host nucleus. The enzyme catalyses S-ubiquitinyl-[E2 ubiquitin-conjugating enzyme]-L-cysteine + [acceptor protein]-L-lysine = [E2 ubiquitin-conjugating enzyme]-L-cysteine + N(6)-ubiquitinyl-[acceptor protein]-L-lysine.. With respect to regulation, exists in an autoinhibited state in the absence of substrate protein, due to interactions of the leucine-rich repeats with NEL domain. Is activated upon binding to a substrate protein. In terms of biological role, effector E3 ubiquitin ligase that interferes with host's ubiquitination pathway and modulates the acute inflammatory responses, thus facilitating bacterial colonization within the host cell. Interacts with IKBKG (NEMO) and TNIP1 (ABIN-1), a ubiquitin-binding adapter protein, which results in TNIP1-dependent 'Lys-27'-linked polyubiquitination of IKBKG. Consequently, polyubiquitinated IKBKG undergoes proteasome-dependent degradation, which perturbs NF-kappa-B activation during bacterial infection. Mediates polyubiquitination of host U2AF1, leading to its proteasomal degradation. Catalyzes 'Lys-48'-linked polyubiquitination and subsequent degradation of a subset of host guanylate-binding proteins (GBP1, GBP2, GBP4 and GBP6), thereby suppressing host cell defense. In contrast, host GBP3 and GBP7 are not ubiquitinated by IpaH9.8. Uses UBE2D2 (UBCH5B) as an E2 ubiquitin-conjugating enzyme. The sequence is that of E3 ubiquitin-protein ligase ipaH9.8 (ipaH9.8) from Shigella sonnei (strain Ss046).